Here is a 192-residue protein sequence, read N- to C-terminus: Natural cytotoxicity triggering receptor 3 (192 aa).

The N-terminal stretch at 1-18 is a signal peptide; sequence MAKVLLIVFIMVYAGSCA. Residues 19–126 form the Ig-like domain; the sequence is IWVSQPPEIR…VGTGNGTRLV (108 aa). Residues 19–147 are Extracellular-facing; sequence IWVSQPPEIR…AEPERAAYTS (129 aa). A disulfide bridge connects residues Cys39 and Cys108. N-linked (GlcNAc...) asparagine glycosylation is found at Asn42 and Asn121. Residues 148 to 168 traverse the membrane as a helical segment; it reads LLLRAGVYALSFLSVATGSVI. At 169–192 the chain is on the cytoplasmic side; the sequence is YYQGKCLCHVGNTATPPTASEERF.

This sequence belongs to the natural cytotoxicity receptor (NCR) family. In terms of assembly, homodimer in the unliganted form. Interacts with CD3Z. Interacts with and is activated by binding to NCR3LG1. Interacts with and is activated by binding to BAG6. Interacts with and is inhibited by binding to LGALS3.

It is found in the cell membrane. Its function is as follows. Cell membrane receptor of natural killer/NK cells that is activated by binding of extracellular ligands including BAG6 and NCR3LG1. Stimulates NK cells cytotoxicity toward neighboring cells producing these ligands. It controls, for instance, NK cells cytotoxicity against tumor cells. Engagement of NCR3 by BAG6 also promotes myeloid dendritic cells (DC) maturation, both through killing DCs that did not acquire a mature phenotype, and inducing the release by NK cells of TNFA and IFNG that promote DC maturation. This is Natural cytotoxicity triggering receptor 3 (Ncr3) from Rattus norvegicus (Rat).